Here is a 462-residue protein sequence, read N- to C-terminus: Prenyltransferase phqI (462 aa).

Residue Glu-101 coordinates brevianamide F. Positions 117, 204, 206, 273, 275, 357, 442, and 446 each coordinate dimethylallyl diphosphate.

The protein belongs to the tryptophan dimethylallyltransferase family.

The protein operates within alkaloid biosynthesis. Its function is as follows. Prenyltransferase; part of the gene cluster that mediates the biosynthesis of paraherquamide, a fungal indole alkaloid that belongs to a family of natural products containing a characteristic bicyclo[2.2.2]diazaoctane core. The first steps in the biosynthesis of paraherquamide is the production of the beta-methyl-proline precursor from L-isoleucine. They require oxidation of a terminally hydroxylated L-isoleucine to the corresponding aldehyde by enzymes which have still to be identified. Spontaneous cyclization and dehydration would yield the 4-methyl pyrolline-5-carboxylic acid, which is then reduced by the pyrroline-5-carboxylate reductase phqD leading to the beta-methyl-proline precursor. The next step of paraherquamide biosynthesis involves coupling of beta-methyl-proline and L-tryptophan by the bimodular NRPS phqB, to produce a monooxopiperazine intermediate. The reductase (R) domain of phqB utilizes NADPH for hydride transfer to reduce the thioester bond of the T domain-tethered linear dipeptide to a hemithioaminal intermediate, which spontaneously cleaves the C-S bond to release the aldehyde product. This compound undergoes spontaneous cyclization and dehydration to give a dienamine which is reverse prenylated at C-2 by the reverse prenyltransferase phqJ. The other prenyltransferase present in the cluster, phqI may be a redundant gene in the pathway. During biosynthetic assembly, the key step to produce the polycyclic core is catalyzed by the bifunctional reductase and intramolecular [4+2] Diels-Alderase, phqE, resulting in formation of the [2.2.2] diazaoctane intermediate preparaherquamide. Following formation of preparaherquamide, an indole 2,3-epoxidation-initiated pinacol-like rearrangement is catalyzed by the phqK FAD-dependent monooxygenase. The prenyltransferase phqA, the cytochrome P450 monooxygenase phqL, and the FAD-linked oxidoreductase phqH (or the cytochrome P450 monooxygenase phqM), are proposed to be involved in the formation of the pyran ring. The FAD-dependent monooxygenase phqK is likely responsible for generation of the spiro-oxindole, and the N-methylation is likely mediated by the phqN methyltransferase leading to the isolable natural product paraherquamide F. However, the order of these biosynthetic steps has still to be determined. In late-stage paraherquamide biosynthesis, the third P450 monooxygenase, phqO, is probably responsible for the C-14 hydroxylation, transforming paraherquamide F to paraherquamide G, and paraherquamide E to the final product paraherquamide A. The expansion from the 6-membered ring pyran (in paraherquamides F and G) to the 7-membered dioxepin ring (in paraherquamides A and E) represents a poorly understood but intriguing process that probably involves the 2-oxoglutarate-dependent dioxygenase phqC. Finally, the remaining members of the paraherquamide cluster, including phqI as well as phqM (or phqH), do not have a clearly prescribed role and appear to be redundant. The sequence is that of Prenyltransferase phqI from Penicillium fellutanum.